Reading from the N-terminus, the 358-residue chain is Type II methyltransferase M.HpaII (358 aa).

In terms of domain architecture, SAM-dependent MTase C5-type spans 32 to 356; the sequence is FTFIDLFAGI…KKILEKLGNL (325 aa). Cys103 is a catalytic residue.

This sequence belongs to the class I-like SAM-binding methyltransferase superfamily. C5-methyltransferase family. Monomer.

The enzyme catalyses a 2'-deoxycytidine in DNA + S-adenosyl-L-methionine = a 5-methyl-2'-deoxycytidine in DNA + S-adenosyl-L-homocysteine + H(+). In terms of biological role, a methylase that recognizes the double-stranded sequence 5'-CCGG-3', methylates C-2 on both strands, and protects the DNA from cleavage by the HpaII endonuclease. This is Type II methyltransferase M.HpaII from Haemophilus parainfluenzae.